The chain runs to 1184 residues: Fibulin-2 (1184 aa).

A signal peptide spans 1–27 (MVLLWEPAGAWLALGLALALGPSVAAA). Residues 28 to 177 (APRQDCTGVE…ELICYQLPGC (150 aa)) are subdomain NA (Cys-rich). The segment at 28–444 (APRQDCTGVE…EGSTKDLIET (417 aa)) is n. Residues 178 to 444 (HGNFSDAEEG…EGSTKDLIET (267 aa)) are subdomain NB (Cys-free). The N-linked (GlcNAc...) asparagine glycan is linked to Asn-180. 2 disordered regions span residues 221 to 293 (VQAG…MAVT) and 399 to 437 (IPPTREVPRKPQVLPHSHVEEDTDPNSVHSIPRSSPEGS). Over residues 224-236 (GAGGPPAALGGGS) the composition is skewed to gly residues. Low complexity predominate over residues 252–261 (PRPTAAAALG). Positions 276 to 288 (DSEEEEEEEEERE) are enriched in acidic residues. Ser-277 carries the post-translational modification Phosphoserine. A compositionally biased stretch (polar residues) spans 423 to 436 (PNSVHSIPRSSPEG). 38 disulfides stabilise this stretch: Cys-445-Cys-472, Cys-446-Cys-479, Cys-459-Cys-480, Cys-489-Cys-518, Cys-502-Cys-519, Cys-521-Cys-545, Cys-522-Cys-552, Cys-535-Cys-553, Cys-608-Cys-620, Cys-616-Cys-629, Cys-631-Cys-644, Cys-683-Cys-693, Cys-689-Cys-702, Cys-704-Cys-717, Cys-723-Cys-736, Cys-730-Cys-745, Cys-751-Cys-762, Cys-768-Cys-781, Cys-775-Cys-790, Cys-796-Cys-808, Cys-814-Cys-827, Cys-821-Cys-836, Cys-843-Cys-856, Cys-862-Cys-875, Cys-869-Cys-884, Cys-886-Cys-899, Cys-905-Cys-917, Cys-913-Cys-926, Cys-928-Cys-941, Cys-947-Cys-956, Cys-952-Cys-965, Cys-967-Cys-980, Cys-986-Cys-998, Cys-994-Cys-1007, Cys-1009-Cys-1023, Cys-1029-Cys-1042, Cys-1036-Cys-1051, and Cys-1056-Cys-1068. 3 consecutive Anaphylatoxin-like domains span residues 445–480 (CCAAGQQWAIDNDECLEIPESGTEDNVCRTAQRHCC), 488–519 (SCMAGVLGAKEGETCGAEDNDSCGISLYKQCC), and 521–553 (CCGLGLRVRAEGQSCESNPNLGYPCNHVMLSCC). N-linked (GlcNAc...) asparagine glycosylation occurs at Asn-507. The region spanning 604 to 645 (DQDECLLLPGELCQHLCINTVGSYHCACFPGFSLQDDGRTCR) is the EGF-like 1; calcium-binding domain. Positions 679-718 (QPNTCKDNGPCKQVCSTVGGSAICSCFPGYAIMADGVSCE) constitute an EGF-like 2 domain. The region spanning 719 to 763 (DINECVTDLHTCSRGEHCVNTLGSFHCYKALTCEPGYALKDGECE) is the EGF-like 3; calcium-binding domain. Residues 764-809 (DVDECAMGTHTCQPGFLCQNTKGSFYCQARQRCMDGFLQDPEGNCV) enclose the EGF-like 4; calcium-binding domain. One can recognise an EGF-like 5; calcium-binding domain in the interval 810–857 (DINECTSLSEPCRPGFSCINTVGSYTCQRNPLICARGYHASDDGTKCV). In terms of domain architecture, EGF-like 6; calcium-binding spans 858–900 (DVNECETGVHRCGEGQVCHNLPGSYRCDCKAGFQRDAFGRGCI). The region spanning 901–942 (DVNECWASPGRLCQHTCENTLGSYRCSCASGFLLAADGKRCE) is the EGF-like 7; calcium-binding domain. In terms of domain architecture, EGF-like 8; calcium-binding spans 943–981 (DVNECEAQRCSQECANIYGSYQCYCRQGYQLAEDGHTCT). The EGF-like 9; calcium-binding domain maps to 982-1024 (DIDECAQGAGILCTFRCLNVPGSYQCACPEQGYTMTANGRSCK). Residues 1025-1069 (DVDECALGTHNCSEAETCHNIQGSFRCLRFECPPNYVQVSKTKCE) enclose the EGF-like 10; calcium-binding domain. N-linked (GlcNAc...) asparagine glycosylation is present at Asn-1035. The tract at residues 1070–1184 (RTTCHDFLEC…MHIFFTTFAL (115 aa)) is domain III.

This sequence belongs to the fibulin family. In terms of assembly, homotrimer; disulfide-linked. Interacts with LAMA2. Interacts with FBN1 (via N-terminal domain). Forms a ternary complex with ELN and FBN1. Post-translationally, O-glycosylated with core 1 or possibly core 8 glycans. It is unsure if the O-glycosylation is on Thr-347 or Ser-348. In terms of tissue distribution, component of both basement membranes and other connective tissues. Expressed in heart, placenta and ovary.

It is found in the secreted. Its subcellular location is the extracellular space. The protein localises to the extracellular matrix. Its function is as follows. Its binding to fibronectin and some other ligands is calcium dependent. May act as an adapter that mediates the interaction between FBN1 and ELN. This chain is Fibulin-2 (FBLN2), found in Homo sapiens (Human).